We begin with the raw amino-acid sequence, 129 residues long: Phosphoribosyl-AMP cyclohydrolase (129 aa).

Aspartate 86 lines the Mg(2+) pocket. Cysteine 87 lines the Zn(2+) pocket. Aspartate 88 and aspartate 90 together coordinate Mg(2+). 2 residues coordinate Zn(2+): cysteine 104 and cysteine 111.

Belongs to the PRA-CH family. As to quaternary structure, homodimer. Requires Mg(2+) as cofactor. It depends on Zn(2+) as a cofactor.

Its subcellular location is the cytoplasm. The enzyme catalyses 1-(5-phospho-beta-D-ribosyl)-5'-AMP + H2O = 1-(5-phospho-beta-D-ribosyl)-5-[(5-phospho-beta-D-ribosylamino)methylideneamino]imidazole-4-carboxamide. The protein operates within amino-acid biosynthesis; L-histidine biosynthesis; L-histidine from 5-phospho-alpha-D-ribose 1-diphosphate: step 3/9. In terms of biological role, catalyzes the hydrolysis of the adenine ring of phosphoribosyl-AMP. This is Phosphoribosyl-AMP cyclohydrolase from Ignicoccus hospitalis (strain KIN4/I / DSM 18386 / JCM 14125).